The chain runs to 412 residues: Intraflagellar transport protein che-13 (412 aa).

Disordered regions lie at residues 1-21 and 162-193; these read MEEEHEEESHLSQSDTVGSAI and PPKEEDEDTAVDEQDEDDDNDDIVEEPMNFLD. Acidic residues predominate over residues 165–193; it reads EEDEDTAVDEQDEDDDNDDIVEEPMNFLD. Positions 302–393 form a coiled coil; that stretch reads QLASMMSKFR…VQIGVFEQSI (92 aa).

This sequence belongs to the IFT57 family. In terms of assembly, component of the IFT complex B composed of at least che-2, che-13, dyf-1, dyf-3, dyf-6, dyf-11, dyf-13, ift-20, ift-74, ift-81, ifta-2, osm-1, osm-5 and osm-6.

The protein resides in the cytoplasm. It is found in the cytoskeleton. The protein localises to the cilium axoneme. In terms of biological role, component of the intraflagellar transport (IFT) complex B required for transport of proteins in the motile cilium. May be required for ciliary entrance and transport of specific ciliary cargo proteins such as che-3 which are related to motility. Required for the formation of chemosensory cilia that detect chemosensory cues. This is Intraflagellar transport protein che-13 from Caenorhabditis elegans.